The following is a 288-amino-acid chain: 4-diphosphocytidyl-2-C-methyl-D-erythritol kinase (288 aa).

K8 is a catalytic residue. ATP is bound at residue 92-102 (PVAAGMAGGST). D134 is a catalytic residue.

Belongs to the GHMP kinase family. IspE subfamily.

The enzyme catalyses 4-CDP-2-C-methyl-D-erythritol + ATP = 4-CDP-2-C-methyl-D-erythritol 2-phosphate + ADP + H(+). The protein operates within isoprenoid biosynthesis; isopentenyl diphosphate biosynthesis via DXP pathway; isopentenyl diphosphate from 1-deoxy-D-xylulose 5-phosphate: step 3/6. Catalyzes the phosphorylation of the position 2 hydroxy group of 4-diphosphocytidyl-2C-methyl-D-erythritol. The polypeptide is 4-diphosphocytidyl-2-C-methyl-D-erythritol kinase (Clostridium perfringens (strain SM101 / Type A)).